The chain runs to 261 residues: 1,6-dihydroxycyclohexa-2,4-diene-1-carboxylate dehydrogenase (261 aa).

13–37 (IVTGAAQGIGRGVALRIAQEGGCLI) contributes to the NAD(+) binding site. Ser-145 provides a ligand contact to substrate. Tyr-156 functions as the Proton acceptor in the catalytic mechanism.

Belongs to the short-chain dehydrogenases/reductases (SDR) family. As to quaternary structure, homodimer.

It carries out the reaction (1R,6S)-1,6-dihydroxycyclohexa-2,4-diene-1-carboxylate + NAD(+) = catechol + CO2 + NADH. It functions in the pathway aromatic compound metabolism; benzoate degradation via hydroxylation; catechol from benzoate: step 2/2. Functionally, degradation of 2-hydro-1,2-dihydroxy benzoate (DHB) to catechol. This Acinetobacter baylyi (strain ATCC 33305 / BD413 / ADP1) protein is 1,6-dihydroxycyclohexa-2,4-diene-1-carboxylate dehydrogenase (benD).